We begin with the raw amino-acid sequence, 343 residues long: Heat-inducible transcription repressor HrcA (343 aa).

This sequence belongs to the HrcA family.

Its function is as follows. Negative regulator of class I heat shock genes (grpE-dnaK-dnaJ and groELS operons). Prevents heat-shock induction of these operons. This Leptospira biflexa serovar Patoc (strain Patoc 1 / Ames) protein is Heat-inducible transcription repressor HrcA.